A 30-amino-acid chain; its full sequence is Photosystem I reaction center subunit XII (30 aa).

The chain crosses the membrane as a helical span at residues 6–26; it reads VFTILAIALVPAVMALLLGSA.

The protein belongs to the PsaM family.

The protein localises to the cellular thylakoid membrane. The polypeptide is Photosystem I reaction center subunit XII (Synechococcus sp. (strain JA-2-3B'a(2-13)) (Cyanobacteria bacterium Yellowstone B-Prime)).